The sequence spans 305 residues: D-alanine--D-alanine ligase (305 aa).

Residues 107-299 (KVIFASAGLK…FGELVLRILQ (193 aa)) form the ATP-grasp domain. 134 to 185 (PLPVVVKPSREGSSVGVGIVRDPSRMQAALDEAFRYDSEILIEGFIDGREVQ) serves as a coordination point for ATP. Residues Asp-253, Glu-266, and Asn-268 each coordinate Mg(2+).

It belongs to the D-alanine--D-alanine ligase family. The cofactor is Mg(2+). Mn(2+) serves as cofactor.

It is found in the cytoplasm. The catalysed reaction is 2 D-alanine + ATP = D-alanyl-D-alanine + ADP + phosphate + H(+). It participates in cell wall biogenesis; peptidoglycan biosynthesis. Its function is as follows. Cell wall formation. This Citrifermentans bemidjiense (strain ATCC BAA-1014 / DSM 16622 / JCM 12645 / Bem) (Geobacter bemidjiensis) protein is D-alanine--D-alanine ligase.